The sequence spans 168 residues: Inorganic pyrophosphatase (168 aa).

Substrate is bound by residues K23, R37, and Y49. Residues D59, D64, and D96 each contribute to the Mg(2+) site. Y133 contributes to the substrate binding site.

Belongs to the PPase family. Homohexamer. Mg(2+) serves as cofactor.

It localises to the cytoplasm. It catalyses the reaction diphosphate + H2O = 2 phosphate + H(+). In terms of biological role, catalyzes the hydrolysis of inorganic pyrophosphate (PPi) forming two phosphate ions. The sequence is that of Inorganic pyrophosphatase from Methanosarcina acetivorans (strain ATCC 35395 / DSM 2834 / JCM 12185 / C2A).